Reading from the N-terminus, the 363-residue chain is 3-dehydroquinate synthase (363 aa).

NAD(+)-binding positions include 134-135 (TT), lysine 147, and lysine 156. Residues glutamate 189, histidine 254, and histidine 271 each coordinate Zn(2+).

It belongs to the sugar phosphate cyclases superfamily. Dehydroquinate synthase family. The cofactor is Co(2+). Requires Zn(2+) as cofactor. NAD(+) is required as a cofactor.

It is found in the cytoplasm. It catalyses the reaction 7-phospho-2-dehydro-3-deoxy-D-arabino-heptonate = 3-dehydroquinate + phosphate. Its pathway is metabolic intermediate biosynthesis; chorismate biosynthesis; chorismate from D-erythrose 4-phosphate and phosphoenolpyruvate: step 2/7. Functionally, catalyzes the conversion of 3-deoxy-D-arabino-heptulosonate 7-phosphate (DAHP) to dehydroquinate (DHQ). The protein is 3-dehydroquinate synthase of Prochlorococcus marinus (strain AS9601).